The sequence spans 539 residues: Phosphoenolpyruvate carboxykinase (ATP) (539 aa).

3 residues coordinate substrate: Arg-64, Tyr-206, and Lys-212. Residues Lys-212, His-231, and 247–255 (GLSGTGKTT) each bind ATP. Mn(2+)-binding residues include Lys-212 and His-231. Asp-268 lines the Mn(2+) pocket. ATP contacts are provided by residues Glu-296, Arg-332, 448–449 (RI), and Thr-454. Arg-332 is a binding site for substrate.

The protein belongs to the phosphoenolpyruvate carboxykinase (ATP) family. In terms of assembly, monomer. Mn(2+) serves as cofactor.

The protein localises to the cytoplasm. The catalysed reaction is oxaloacetate + ATP = phosphoenolpyruvate + ADP + CO2. It participates in carbohydrate biosynthesis; gluconeogenesis. Involved in the gluconeogenesis. Catalyzes the conversion of oxaloacetate (OAA) to phosphoenolpyruvate (PEP) through direct phosphoryl transfer between the nucleoside triphosphate and OAA. The polypeptide is Phosphoenolpyruvate carboxykinase (ATP) (Citrobacter koseri (strain ATCC BAA-895 / CDC 4225-83 / SGSC4696)).